The primary structure comprises 510 residues: NAD(P)H-quinone oxidoreductase subunit 2 A, chloroplastic (510 aa).

The next 13 helical transmembrane spans lie at 24–44 (LLLF…GLIL), 57–77 (IPWL…ALLF), 99–119 (IFQF…VEYI), 124–144 (MAIT…MFLC), 149–169 (LITI…LSGY), 183–203 (YLLM…WLYG), 227–247 (PGIS…LSLA), 295–315 (WHLL…LIAI), 323–343 (MLAY…IVGD), 354–374 (YMLF…SFGL), 395–415 (ALSL…AGFF), 418–438 (LHLF…IGLL), and 484–504 (MIVC…IIAI).

The protein belongs to the complex I subunit 2 family. In terms of assembly, NDH is composed of at least 16 different subunits, 5 of which are encoded in the nucleus.

The protein localises to the plastid. The protein resides in the chloroplast thylakoid membrane. It catalyses the reaction a plastoquinone + NADH + (n+1) H(+)(in) = a plastoquinol + NAD(+) + n H(+)(out). It carries out the reaction a plastoquinone + NADPH + (n+1) H(+)(in) = a plastoquinol + NADP(+) + n H(+)(out). NDH shuttles electrons from NAD(P)H:plastoquinone, via FMN and iron-sulfur (Fe-S) centers, to quinones in the photosynthetic chain and possibly in a chloroplast respiratory chain. The immediate electron acceptor for the enzyme in this species is believed to be plastoquinone. Couples the redox reaction to proton translocation, and thus conserves the redox energy in a proton gradient. This is NAD(P)H-quinone oxidoreductase subunit 2 A, chloroplastic from Ranunculus macranthus (Large buttercup).